A 169-amino-acid polypeptide reads, in one-letter code: UPF0303 protein Oant_1766 (169 aa).

This sequence belongs to the UPF0303 family.

This is UPF0303 protein Oant_1766 from Brucella anthropi (strain ATCC 49188 / DSM 6882 / CCUG 24695 / JCM 21032 / LMG 3331 / NBRC 15819 / NCTC 12168 / Alc 37) (Ochrobactrum anthropi).